Here is a 338-residue protein sequence, read N- to C-terminus: O-methyltransferase 4 (338 aa).

Positions 184, 207, 230, 231, 244, and 245 each coordinate S-adenosyl-L-methionine. The active-site Proton acceptor is His-248.

Belongs to the class I-like SAM-binding methyltransferase superfamily. Cation-independent O-methyltransferase family. COMT subfamily.

The catalysed reaction is (3,5-dichloro-2,4,6-trihydroxyphenyl)hexan-1-one + S-adenosyl-L-methionine = 1-(3,5-dichloro-2,6-dihydroxy-4-methoxyphenyl)hexan-1-one + S-adenosyl-L-homocysteine + H(+). The sequence is that of O-methyltransferase 4 (omt4) from Dictyostelium discoideum (Social amoeba).